We begin with the raw amino-acid sequence, 548 residues long: 5-epi-aristolochene synthase 3 (548 aa).

5 residues coordinate Mg(2+): aspartate 301, aspartate 305, aspartate 444, threonine 448, and glutamate 452. Residues 301–305 (DDTFD) carry the DDXXD motif motif.

Belongs to the terpene synthase family. As to quaternary structure, monomer. Mg(2+) is required as a cofactor. As to expression, expressed in roots, but not in shoots.

The protein resides in the cytoplasm. The catalysed reaction is (2E,6E)-farnesyl diphosphate = (+)-5-epi-aristolochene + diphosphate. The protein operates within secondary metabolite biosynthesis; terpenoid biosynthesis. Catalyzes the cyclization of trans,trans-farnesyl diphosphate (FPP) to the bicyclic intermediate 5-epi-aristolochene, initial step in the conversion of FPP to the sesquiterpenoid antifungal phytoalexin capsidiol. Produces germacrene A as an enzyme-bound intermediate that is not released by the enzyme, but is further cyclized to produce the bicyclic 5-epi-aristolochene. The chain is 5-epi-aristolochene synthase 3 from Nicotiana attenuata (Coyote tobacco).